A 241-amino-acid chain; its full sequence is Protein-L-isoaspartate O-methyltransferase (241 aa).

S69 is an active-site residue.

The protein belongs to the methyltransferase superfamily. L-isoaspartyl/D-aspartyl protein methyltransferase family.

The protein localises to the cytoplasm. The enzyme catalyses [protein]-L-isoaspartate + S-adenosyl-L-methionine = [protein]-L-isoaspartate alpha-methyl ester + S-adenosyl-L-homocysteine. Catalyzes the methyl esterification of L-isoaspartyl residues in peptides and proteins that result from spontaneous decomposition of normal L-aspartyl and L-asparaginyl residues. It plays a role in the repair and/or degradation of damaged proteins. The protein is Protein-L-isoaspartate O-methyltransferase of Hyperthermus butylicus (strain DSM 5456 / JCM 9403 / PLM1-5).